We begin with the raw amino-acid sequence, 432 residues long: Adenylosuccinate synthetase (432 aa).

Residues 13-19 (GDEGKGK) and 41-43 (GHT) contribute to the GTP site. Residue Asp-14 is the Proton acceptor of the active site. Positions 14 and 41 each coordinate Mg(2+). Residues 14–17 (DEGK), 39–42 (NAGH), Thr-131, Arg-145, Gln-226, Thr-241, and Arg-305 each bind IMP. Residue His-42 is the Proton donor of the active site. 301-307 (SVTGRAR) contributes to the substrate binding site. Residues Arg-307, 333-335 (KLD), and 416-418 (STG) each bind GTP.

This sequence belongs to the adenylosuccinate synthetase family. Homodimer. Requires Mg(2+) as cofactor.

The protein localises to the cytoplasm. It catalyses the reaction IMP + L-aspartate + GTP = N(6)-(1,2-dicarboxyethyl)-AMP + GDP + phosphate + 2 H(+). It functions in the pathway purine metabolism; AMP biosynthesis via de novo pathway; AMP from IMP: step 1/2. Plays an important role in the de novo pathway of purine nucleotide biosynthesis. Catalyzes the first committed step in the biosynthesis of AMP from IMP. This is Adenylosuccinate synthetase from Neisseria meningitidis serogroup B (strain ATCC BAA-335 / MC58).